Consider the following 438-residue polypeptide: Dihydrolipoyllysine-residue acetyltransferase component of pyruvate dehydrogenase complex (438 aa).

The Lipoyl-binding domain occupies 1-76 (MFKVKFADIG…KVGDVVMEIE (76 aa)). K42 bears the N6-lipoyllysine mark. The region spanning 132–169 (KATPLARKVAADLNIDLSLVTPTGPNQRILVADIKNHQ) is the Peripheral subunit-binding (PSBD) domain. The segment covering 172–181 (STQLASQPIS) has biased composition (polar residues). Positions 172–192 (STQLASQPISQPAPTPSPSAH) are disordered. The active site involves H411.

Belongs to the 2-oxoacid dehydrogenase family. In terms of assembly, forms a 24-polypeptide structural core with octahedral symmetry. Requires (R)-lipoate as cofactor.

It catalyses the reaction N(6)-[(R)-dihydrolipoyl]-L-lysyl-[protein] + acetyl-CoA = N(6)-[(R)-S(8)-acetyldihydrolipoyl]-L-lysyl-[protein] + CoA. Functionally, the pyruvate dehydrogenase complex catalyzes the overall conversion of pyruvate to acetyl-CoA and CO(2). It contains multiple copies of three enzymatic components: pyruvate dehydrogenase (E1), dihydrolipoamide acetyltransferase (E2) and lipoamide dehydrogenase (E3). The chain is Dihydrolipoyllysine-residue acetyltransferase component of pyruvate dehydrogenase complex (pdhC) from Mycoplasma capricolum subsp. capricolum (strain California kid / ATCC 27343 / NCTC 10154).